A 334-amino-acid polypeptide reads, in one-letter code: MVHSKVVIIGSGAGAHTAAIYLSRAELQPVLYEGMLANGTAAGGQLTTTTDVENFPGFPSGIGGAELMDNMRAQSERFGTEIITETISKLDLSSRPFKMWTEWNDDEGSEPVRTADAVIIATGANARRLNLPGEETYWQNGISACAVCDGAVPIFRNKPLYVIGGGDSAAEEAMFLAKYGSSVTVLVRKDKLRASNIMADRLLAHPKCKVRFNTVATEVIGENKPNGLMTHLRVKDVLSNAEEVVEANGLFYAVGHDPASGLVKGQVELDDEGYIITKPGTSFTNVEGVFACGDVQDKRYRQAITSAGSGCVAALEAEKFIAETETHQEAKPVL.

FAD is bound by residues 11–14 (SGAG), 40–41 (TA), Gln-45, Asn-54, Cys-148, Asp-294, and 301–303 (RQA). An intrachain disulfide couples Cys-145 to Cys-148.

The protein belongs to the class-II pyridine nucleotide-disulfide oxidoreductase family. In terms of assembly, homodimer. The cofactor is FAD.

It carries out the reaction [thioredoxin]-dithiol + NADP(+) = [thioredoxin]-disulfide + NADPH + H(+). In terms of biological role, component of the thioredoxin-thioredoxin reductase system which may be involved in biosynthesis of penicillins and cephalosporins and may be important in determining the thiol-disulfide redox balance. The chain is Thioredoxin reductase (TRR1) from Penicillium chrysogenum (Penicillium notatum).